The following is a 158-amino-acid chain: UPF0178 protein Rpal_2485 (158 aa).

Belongs to the UPF0178 family.

This chain is UPF0178 protein Rpal_2485, found in Rhodopseudomonas palustris (strain TIE-1).